The sequence spans 388 residues: Succinate--CoA ligase [ADP-forming] subunit beta (388 aa).

The ATP-grasp domain maps to 9–244; it reads KALFAEYGLP…PSQDDAREAH (236 aa). ATP-binding positions include Lys46, 53–55, Glu99, Thr102, and Glu107; that span reads GRG. Mg(2+) contacts are provided by Asn199 and Asp213. Substrate is bound by residues Asn264 and 321–323; that span reads GIV.

The protein belongs to the succinate/malate CoA ligase beta subunit family. As to quaternary structure, heterotetramer of two alpha and two beta subunits. Mg(2+) serves as cofactor.

The catalysed reaction is succinate + ATP + CoA = succinyl-CoA + ADP + phosphate. It catalyses the reaction GTP + succinate + CoA = succinyl-CoA + GDP + phosphate. It participates in carbohydrate metabolism; tricarboxylic acid cycle; succinate from succinyl-CoA (ligase route): step 1/1. Its function is as follows. Succinyl-CoA synthetase functions in the citric acid cycle (TCA), coupling the hydrolysis of succinyl-CoA to the synthesis of either ATP or GTP and thus represents the only step of substrate-level phosphorylation in the TCA. The beta subunit provides nucleotide specificity of the enzyme and binds the substrate succinate, while the binding sites for coenzyme A and phosphate are found in the alpha subunit. The sequence is that of Succinate--CoA ligase [ADP-forming] subunit beta from Shewanella loihica (strain ATCC BAA-1088 / PV-4).